The primary structure comprises 313 residues: tRNA dimethylallyltransferase (313 aa).

Residue 11–18 (GPTACGKT) coordinates ATP. 13-18 (TACGKT) provides a ligand contact to substrate. Interaction with substrate tRNA regions lie at residues 36–39 (DSAL), 160–164 (QRIGR), and 243–248 (RCVGYR).

This sequence belongs to the IPP transferase family. Monomer. It depends on Mg(2+) as a cofactor.

It catalyses the reaction adenosine(37) in tRNA + dimethylallyl diphosphate = N(6)-dimethylallyladenosine(37) in tRNA + diphosphate. In terms of biological role, catalyzes the transfer of a dimethylallyl group onto the adenine at position 37 in tRNAs that read codons beginning with uridine, leading to the formation of N6-(dimethylallyl)adenosine (i(6)A). This is tRNA dimethylallyltransferase from Neisseria gonorrhoeae (strain ATCC 700825 / FA 1090).